The chain runs to 390 residues: Serine/threonine/tyrosine-protein kinase HT1 (390 aa).

In terms of domain architecture, Protein kinase spans 86–359 (LFIGNKFASG…GLPLTSHASL (274 aa)). ATP is bound by residues 92-100 (FASGAHSRI) and Lys-113. Asp-212 functions as the Proton acceptor in the catalytic mechanism.

The protein belongs to the protein kinase superfamily. Ser/Thr protein kinase family. Interacts with DTX56. Binds to MPK4 and MPK12. Associates to CBC1 and CBC2. Post-translationally, autophosphorylated. In terms of tissue distribution, mainly localizes in guard cells. Expressed at low level in leaves, stems, roots and flowers.

Its subcellular location is the cell membrane. It carries out the reaction L-seryl-[protein] + ATP = O-phospho-L-seryl-[protein] + ADP + H(+). The enzyme catalyses L-threonyl-[protein] + ATP = O-phospho-L-threonyl-[protein] + ADP + H(+). The catalysed reaction is L-tyrosyl-[protein] + ATP = O-phospho-L-tyrosyl-[protein] + ADP + H(+). With respect to regulation, inhibited by MPK4 and MPK12. Functionally, serine/threonine/tyrosine kinase involved in the control of stomatal movement in response to CO(2). Functions as a major negative regulator of CO(2)-induced stomatal closing. Does not seem to be involved in stomatal closure in response to abscisic acid (ABA) or light. Involved in the control of red light-induced stomatal opening. Is epistatic to SRK2E/OST1 function during stomatal responses to red light and altered CO(2). Phosphorylates SRK2E/OST1 and GHR1 to prevents SRK2E/OST1- and GHR1-induced activation of SLAC1, thus preventing stomatal closure. Mediates the phosphorylation of CBC1 and CBC2. The chain is Serine/threonine/tyrosine-protein kinase HT1 from Arabidopsis thaliana (Mouse-ear cress).